We begin with the raw amino-acid sequence, 465 residues long: Lactaldehyde dehydrogenase (465 aa).

Residue 220-225 (GSVEIG) coordinates NAD(+). Residues E240 and C274 contribute to the active site.

Belongs to the aldehyde dehydrogenase family. Homotetramer.

It carries out the reaction (S)-lactaldehyde + NAD(+) + H2O = (S)-lactate + NADH + 2 H(+). Its pathway is cofactor biosynthesis; coenzyme F420 biosynthesis. In terms of biological role, involved in F420 biosynthesis through the oxidation of lactaldehyde to lactate. This is Lactaldehyde dehydrogenase from Methanococcus maripaludis (strain C7 / ATCC BAA-1331).